Reading from the N-terminus, the 364-residue chain is Protein MGF 360-18R (364 aa).

It belongs to the asfivirus MGF 360 family.

Its function is as follows. Plays a role in virus cell tropism, and may be required for efficient virus replication in macrophages. The protein is Protein MGF 360-18R of African swine fever virus (isolate Tick/South Africa/Pretoriuskop Pr4/1996) (ASFV).